Here is a 215-residue protein sequence, read N- to C-terminus: 3-demethoxyubiquinol 3-hydroxylase (215 aa).

The Fe cation site is built by Glu-64, Glu-94, His-97, Glu-146, Glu-178, and His-181.

It belongs to the COQ7 family. Fe cation is required as a cofactor.

Its subcellular location is the cell membrane. It catalyses the reaction a 5-methoxy-2-methyl-3-(all-trans-polyprenyl)benzene-1,4-diol + AH2 + O2 = a 3-demethylubiquinol + A + H2O. It participates in cofactor biosynthesis; ubiquinone biosynthesis. Functionally, catalyzes the hydroxylation of 2-nonaprenyl-3-methyl-6-methoxy-1,4-benzoquinol during ubiquinone biosynthesis. This is 3-demethoxyubiquinol 3-hydroxylase from Pseudomonas fluorescens (strain SBW25).